A 156-amino-acid polypeptide reads, in one-letter code: ATP synthase subunit b (156 aa).

The chain crosses the membrane as a helical span at residues 5–25 (LTLIGQAIAFAFFVAFCMKFV).

It belongs to the ATPase B chain family. F-type ATPases have 2 components, F(1) - the catalytic core - and F(0) - the membrane proton channel. F(1) has five subunits: alpha(3), beta(3), gamma(1), delta(1), epsilon(1). F(0) has three main subunits: a(1), b(2) and c(10-14). The alpha and beta chains form an alternating ring which encloses part of the gamma chain. F(1) is attached to F(0) by a central stalk formed by the gamma and epsilon chains, while a peripheral stalk is formed by the delta and b chains.

The protein resides in the cell inner membrane. F(1)F(0) ATP synthase produces ATP from ADP in the presence of a proton or sodium gradient. F-type ATPases consist of two structural domains, F(1) containing the extramembraneous catalytic core and F(0) containing the membrane proton channel, linked together by a central stalk and a peripheral stalk. During catalysis, ATP synthesis in the catalytic domain of F(1) is coupled via a rotary mechanism of the central stalk subunits to proton translocation. Its function is as follows. Component of the F(0) channel, it forms part of the peripheral stalk, linking F(1) to F(0). This chain is ATP synthase subunit b, found in Acinetobacter baumannii (strain SDF).